The following is a 117-amino-acid chain: Large ribosomal subunit protein uL24 (117 aa).

Belongs to the universal ribosomal protein uL24 family. Part of the 50S ribosomal subunit.

Functionally, one of two assembly initiator proteins, it binds directly to the 5'-end of the 23S rRNA, where it nucleates assembly of the 50S subunit. Its function is as follows. One of the proteins that surrounds the polypeptide exit tunnel on the outside of the subunit. The polypeptide is Large ribosomal subunit protein uL24 (Trichormus variabilis (strain ATCC 29413 / PCC 7937) (Anabaena variabilis)).